Consider the following 42-residue polypeptide: Large ribosomal subunit protein bL36 (42 aa).

This sequence belongs to the bacterial ribosomal protein bL36 family.

This Ehrlichia ruminantium (strain Gardel) protein is Large ribosomal subunit protein bL36.